The primary structure comprises 265 residues: Mlc titration factor A (265 aa).

Zn(2+)-binding residues include histidine 111, histidine 148, histidine 152, and glutamate 211.

Belongs to the MtfA family. Interacts with Mlc. Zn(2+) is required as a cofactor.

The protein resides in the cytoplasm. In terms of biological role, involved in the modulation of the activity of the glucose-phosphotransferase system (glucose-PTS). Interacts with the transcriptional repressor Mlc, preventing its interaction with DNA and leading to the modulation of expression of genes regulated by Mlc, including ptsG, which encodes the PTS system glucose-specific EIICB component. Functionally, shows zinc-dependent metallopeptidase activity. The polypeptide is Mlc titration factor A (Escherichia coli O17:K52:H18 (strain UMN026 / ExPEC)).